The following is a 568-amino-acid chain: 2-succinyl-5-enolpyruvyl-6-hydroxy-3-cyclohexene-1-carboxylate synthase (568 aa).

It belongs to the TPP enzyme family. MenD subfamily. In terms of assembly, homodimer. It depends on Mg(2+) as a cofactor. Requires Mn(2+) as cofactor. The cofactor is thiamine diphosphate.

The catalysed reaction is isochorismate + 2-oxoglutarate + H(+) = 5-enolpyruvoyl-6-hydroxy-2-succinyl-cyclohex-3-ene-1-carboxylate + CO2. The protein operates within quinol/quinone metabolism; 1,4-dihydroxy-2-naphthoate biosynthesis; 1,4-dihydroxy-2-naphthoate from chorismate: step 2/7. Its pathway is quinol/quinone metabolism; menaquinone biosynthesis. In terms of biological role, catalyzes the thiamine diphosphate-dependent decarboxylation of 2-oxoglutarate and the subsequent addition of the resulting succinic semialdehyde-thiamine pyrophosphate anion to isochorismate to yield 2-succinyl-5-enolpyruvyl-6-hydroxy-3-cyclohexene-1-carboxylate (SEPHCHC). The polypeptide is 2-succinyl-5-enolpyruvyl-6-hydroxy-3-cyclohexene-1-carboxylate synthase (Haemophilus influenzae (strain 86-028NP)).